The following is a 300-amino-acid chain: Acetylglutamate kinase (300 aa).

Substrate-binding positions include 73-74 (GG), Arg95, and Asn197.

It belongs to the acetylglutamate kinase family. ArgB subfamily.

Its subcellular location is the cytoplasm. It carries out the reaction N-acetyl-L-glutamate + ATP = N-acetyl-L-glutamyl 5-phosphate + ADP. Its pathway is amino-acid biosynthesis; L-arginine biosynthesis; N(2)-acetyl-L-ornithine from L-glutamate: step 2/4. In terms of biological role, catalyzes the ATP-dependent phosphorylation of N-acetyl-L-glutamate. The polypeptide is Acetylglutamate kinase (Bordetella pertussis (strain Tohama I / ATCC BAA-589 / NCTC 13251)).